The primary structure comprises 109 residues: Large ribosomal subunit protein eL30 (109 aa).

Belongs to the eukaryotic ribosomal protein eL30 family.

The protein is Large ribosomal subunit protein eL30 (RPL30) of Yarrowia lipolytica (strain CLIB 122 / E 150) (Yeast).